Reading from the N-terminus, the 354-residue chain is Guanine nucleotide-binding protein G(o) subunit alpha (354 aa).

Gly-2 carries N-myristoyl glycine lipidation. Cys-3 carries S-palmitoyl cysteine lipidation. In terms of domain architecture, G-alpha spans 32 to 354 (KDVKLLLLGA…ANNLRGCGLY (323 aa)). Residues 35-48 (KLLLLGAGESGKST) are G1 motif. Glu-43, Lys-46, Ser-47, Thr-48, Ser-152, Leu-176, Arg-177, Thr-178, and Arg-179 together coordinate GTP. Ser-47 is a Mg(2+) binding site. Positions 174 to 182 (DILRTRVKT) are G2 motif. Arg-179 is subject to ADP-ribosylarginine; by cholera toxin. Thr-182 serves as a coordination point for Mg(2+). The interval 197 to 206 (FRLFDVGGQR) is G3 motif. Residue Gln-205 is modified to 5-glutamyl histamine. The segment at 266 to 273 (ILFLNKKD) is G4 motif. Residues Asn-270, Asp-273, and Cys-325 each contribute to the GTP site. Residues 324–329 (TCATDT) form a G5 motif region. Residue Cys-351 is the site of S-palmitoyl cysteine attachment. Cys-351 is subject to ADP-ribosylcysteine; by pertussis toxin.

This sequence belongs to the G-alpha family. G(i/o/t/z) subfamily. As to quaternary structure, g proteins are composed of 3 units; alpha, beta and gamma. The alpha chain contains the guanine nucleotide binding site. Forms a complex with GNB1 and GNG3. Interacts with RGS14. Interacts with RGS16. Interacts with RGS19. Interacts (when palmitoylated) with ADGRG3. In terms of processing, histaminylated at Gln-205 residues by TGM2. Post-translationally, palmitoylated at Cys-351, leading to binding to ADGRG3.

The protein resides in the cell membrane. It is found in the membrane. The catalysed reaction is GTP + H2O = GDP + phosphate + H(+). With respect to regulation, the GTPase activity is promoted by GTPAse activators, such as RGS14, RGS16 and RGS19. Its function is as follows. Guanine nucleotide-binding proteins (G proteins) function as transducers downstream of G protein-coupled receptors (GPCRs) in numerous signaling cascades. The alpha chain contains the guanine nucleotide binding site and alternates between an active, GTP-bound state and an inactive, GDP-bound state. Signaling by an activated GPCR promotes GDP release and GTP binding. The alpha subunit has a low GTPase activity that converts bound GTP to GDP, thereby terminating the signal. Both GDP release and GTP hydrolysis are modulated by numerous regulatory proteins. Signaling is mediated via effector proteins, such as adenylate cyclase. Inhibits adenylate cyclase activity, leading to decreased intracellular cAMP levels. This is Guanine nucleotide-binding protein G(o) subunit alpha (GNAO1) from Homo sapiens (Human).